The chain runs to 225 residues: Protein ERP3 (225 aa).

The first 23 residues, 1 to 23 (MSNLCVLFFQFFFLAQFFAEASP), serve as a signal peptide directing secretion. At 24–195 (LTFELNKGRK…STEHRIVMFS (172 aa)) the chain is on the lumenal side. Residues 33–172 (KECLYTLTPE…LHVLERNIQY (140 aa)) form the GOLD domain. Positions 129 to 138 (ERRKARKAQR) are enriched in basic residues. The disordered stretch occupies residues 129-149 (ERRKARKAQRNLRDSKTDPLQ). A helical membrane pass occupies residues 196 to 216 (IYGILLIIGMSCAQIAILEFI). At 217 to 225 (FRESRKHNV) the chain is on the cytoplasmic side.

The protein belongs to the EMP24/GP25L family.

The protein localises to the endoplasmic reticulum membrane. Its function is as follows. Involved in vesicular protein trafficking. This is Protein ERP3 (ERP3) from Saccharomyces cerevisiae (strain ATCC 204508 / S288c) (Baker's yeast).